The primary structure comprises 258 residues: Proliferating cell nuclear antigen (258 aa).

Residues 61 to 80 (RCDHPVTLGMDLTSLSKILR) mediate DNA binding. K127 is covalently cross-linked (Glycyl lysine isopeptide (Lys-Gly) (interchain with G-Cter in SUMO)). K164 is covalently cross-linked (Glycyl lysine isopeptide (Lys-Gly) (interchain with G-Cter in SUMO); alternate). K164 participates in a covalent cross-link: Glycyl lysine isopeptide (Lys-Gly) (interchain with G-Cter in ubiquitin); alternate.

This sequence belongs to the PCNA family. Homotrimer. Interacts with RAD30. Interacts with MCM10. Interacts with UBP10. In terms of processing, sumoylated on Lys-164, and to a lesser extent on Lys-127 by the UBC9/SIZ1 complex during S-phase; which impairs ubiquitination and function in DNA repair. Post-translationally, monoubiquitinated on Lys-164 by the UBC2/RAD18 complex upon DNA damage, and then polyubiquitinated through 'Lys-63'-linkage by UBC13/MMS2. Ubiquitination is required for UBC2-mediated DNA repair. Lys-164 is deubiquitinated by UBP10.

It localises to the nucleus. In terms of biological role, this protein is an auxiliary protein of DNA polymerase delta and is involved in the control of eukaryotic DNA replication by increasing the polymerase's processibility during elongation of the leading strand. Involved in DNA repair. The polypeptide is Proliferating cell nuclear antigen (POL30) (Saccharomyces cerevisiae (strain ATCC 204508 / S288c) (Baker's yeast)).